The following is a 139-amino-acid chain: Putative pre-16S rRNA nuclease (139 aa).

This sequence belongs to the YqgF nuclease family.

It localises to the cytoplasm. Its function is as follows. Could be a nuclease involved in processing of the 5'-end of pre-16S rRNA. In Photorhabdus laumondii subsp. laumondii (strain DSM 15139 / CIP 105565 / TT01) (Photorhabdus luminescens subsp. laumondii), this protein is Putative pre-16S rRNA nuclease.